The sequence spans 695 residues: UvrABC system protein B (695 aa).

In terms of domain architecture, Helicase ATP-binding spans 45–434 (EGIEDGLSFQ…QVVEQVVRPT (390 aa)). 58–65 (GVTGSGKT) lines the ATP pocket. The short motif at 111–134 (YYDYYQPEAYVPQRDLFIEKDSSI) is the Beta-hairpin element. Residues 449–602 (QVDDLLSEIN…QMAFNEANGI (154 aa)) form the Helicase C-terminal domain. A UVR domain is found at 646 to 681 (SKEIKRLEKLMMDHAKNLEFEKAAQVRDQLAKLKAQ).

It belongs to the UvrB family. Forms a heterotetramer with UvrA during the search for lesions. Interacts with UvrC in an incision complex.

Its subcellular location is the cytoplasm. In terms of biological role, the UvrABC repair system catalyzes the recognition and processing of DNA lesions. A damage recognition complex composed of 2 UvrA and 2 UvrB subunits scans DNA for abnormalities. Upon binding of the UvrA(2)B(2) complex to a putative damaged site, the DNA wraps around one UvrB monomer. DNA wrap is dependent on ATP binding by UvrB and probably causes local melting of the DNA helix, facilitating insertion of UvrB beta-hairpin between the DNA strands. Then UvrB probes one DNA strand for the presence of a lesion. If a lesion is found the UvrA subunits dissociate and the UvrB-DNA preincision complex is formed. This complex is subsequently bound by UvrC and the second UvrB is released. If no lesion is found, the DNA wraps around the other UvrB subunit that will check the other stand for damage. This is UvrABC system protein B from Cupriavidus pinatubonensis (strain JMP 134 / LMG 1197) (Cupriavidus necator (strain JMP 134)).